The sequence spans 439 residues: Iron-sulfur cluster assembly factor IBA57 homolog, mitochondrial (439 aa).

A mitochondrion-targeting transit peptide spans 1-72; that stretch reads MQPATRSIAV…RLISVSGPDA (72 aa).

It belongs to the GcvT family. CAF17/IBA57 subfamily.

Its subcellular location is the mitochondrion matrix. The protein is Iron-sulfur cluster assembly factor IBA57 homolog, mitochondrial (caf-17) of Neurospora crassa (strain ATCC 24698 / 74-OR23-1A / CBS 708.71 / DSM 1257 / FGSC 987).